Consider the following 303-residue polypeptide: Methionyl-tRNA formyltransferase (303 aa).

A (6S)-5,6,7,8-tetrahydrofolate-binding site is contributed by 108–111; sequence SDLP.

It belongs to the Fmt family.

It catalyses the reaction L-methionyl-tRNA(fMet) + (6R)-10-formyltetrahydrofolate = N-formyl-L-methionyl-tRNA(fMet) + (6S)-5,6,7,8-tetrahydrofolate + H(+). Functionally, attaches a formyl group to the free amino group of methionyl-tRNA(fMet). The formyl group appears to play a dual role in the initiator identity of N-formylmethionyl-tRNA by promoting its recognition by IF2 and preventing the misappropriation of this tRNA by the elongation apparatus. The chain is Methionyl-tRNA formyltransferase from Rickettsia prowazekii (strain Madrid E).